Here is a 999-residue protein sequence, read N- to C-terminus: Hypoxia up-regulated protein 1 (999 aa).

The N-terminal stretch at 1 to 32 (MAATVRRQRPRRLLCWALVAVLLADLLALSDT) is a signal peptide. N-linked (GlcNAc...) asparagine glycosylation is found at asparagine 155, asparagine 222, and asparagine 515. The segment at 564–694 (VEDSPEEEST…KKQKPARKQK (131 aa)) is disordered. The residue at position 567 (serine 567) is a Phosphoserine. The span at 574 to 583 (LTKLGNTISS) shows a compositional bias: polar residues. An N-linked (GlcNAc...) asparagine glycan is attached at asparagine 596. Composition is skewed to basic and acidic residues over residues 611–626 (GSKD…KEEA) and 641–668 (PKGD…KPNE). Asparagine 830, asparagine 862, and asparagine 869 each carry an N-linked (GlcNAc...) asparagine glycan. Lysine 883 carries the post-translational modification N6-acetyllysine. The segment at 909–999 (AKFTKPRPRP…QKRPLKNDEL (91 aa)) is disordered. N-linked (GlcNAc...) asparagine glycans are attached at residues asparagine 922 and asparagine 931. The span at 949 to 962 (EEAKAILEPDKEGL) shows a compositional bias: basic and acidic residues. The Prevents secretion from ER motif lies at 996–999 (NDEL).

The protein belongs to the heat shock protein 70 family. In terms of assembly, part of a large chaperone multiprotein complex comprising DNAJB11, HSP90B1, HSPA5, HYOU, PDIA2, PDIA4, PDIA6, PPIB, SDF2L1, UGGT1 and very small amounts of ERP29, but not, or at very low levels, CALR nor CANX. In terms of tissue distribution, selectively expressed by cultured astrocytes but not endothelial cells, microglia or neurons.

It is found in the endoplasmic reticulum lumen. Its function is as follows. Has a pivotal role in cytoprotective cellular mechanisms triggered by oxygen deprivation. Promotes HSPA5/BiP-mediated ATP nucleotide exchange and thereby activates the unfolded protein response (UPR) pathway in the presence of endoplasmic reticulum stress. May play a role as a molecular chaperone and participate in protein folding. This Rattus norvegicus (Rat) protein is Hypoxia up-regulated protein 1 (Hyou1).